The primary structure comprises 511 residues: Maturase K (511 aa).

The protein belongs to the intron maturase 2 family. MatK subfamily.

Its subcellular location is the plastid. It is found in the chloroplast. In terms of biological role, usually encoded in the trnK tRNA gene intron. Probably assists in splicing its own and other chloroplast group II introns. The polypeptide is Maturase K (Bromus inermis (Smooth brome grass)).